A 58-amino-acid polypeptide reads, in one-letter code: Sperm histone P2b (58 aa).

The interval Leu-20–His-41 is disordered.

It belongs to the protamine P2 family. As to expression, testis.

The protein resides in the nucleus. The protein localises to the chromosome. Its function is as follows. Protamines substitute for histones in the chromatin of sperm during the haploid phase of spermatogenesis. They compact sperm DNA into a highly condensed, stable and inactive complex. This is Sperm histone P2b from Equus caballus (Horse).